The sequence spans 229 residues: tRNA pseudouridine synthase B (229 aa).

The active-site Nucleophile is D42.

The protein belongs to the pseudouridine synthase TruB family. Type 1 subfamily.

The catalysed reaction is uridine(55) in tRNA = pseudouridine(55) in tRNA. Its function is as follows. Responsible for synthesis of pseudouridine from uracil-55 in the psi GC loop of transfer RNAs. This is tRNA pseudouridine synthase B from Ureaplasma urealyticum serovar 10 (strain ATCC 33699 / Western).